Reading from the N-terminus, the 157-residue chain is MLRQLNLTREISRWIFMPWQRGAAGTASAEPPALPINDVIVDYDGPDLPLPEYPQRPNEPLEIRKQRLVYQSRKRGMLENDLLLSTFAAKYLKNFNEEQTAIYDQLINGVSNDWDIYYWATDVKTTPAEYNTEIMQLLKEHVKNTERVQRFRQPDLT.

Belongs to the SDHAF2 family. In terms of assembly, interacts with the flavoprotein subunit within the SDH catalytic dimer.

It is found in the mitochondrion matrix. Functionally, plays an essential role in the assembly of succinate dehydrogenase (SDH), an enzyme complex (also referred to as respiratory complex II) that is a component of both the tricarboxylic acid (TCA) cycle and the mitochondrial electron transport chain, and which couples the oxidation of succinate to fumarate with the reduction of ubiquinone (coenzyme Q) to ubiquinol. Required for flavinylation (covalent attachment of FAD) of the flavoprotein subunit of the SDH catalytic dimer. This chain is Succinate dehydrogenase assembly factor 2-A, mitochondrial, found in Drosophila willistoni (Fruit fly).